We begin with the raw amino-acid sequence, 504 residues long: Putative arrestin-related trafficking adapter SPBC839.02 (504 aa).

Positions 481–504 are disordered; sequence QAPPPKYDDIFQSGSSHDENHDDN.

The protein belongs to the ALY1 family.

Functionally, may regulate endocytosis in response to extracellular stimuli. This Schizosaccharomyces pombe (strain 972 / ATCC 24843) (Fission yeast) protein is Putative arrestin-related trafficking adapter SPBC839.02.